We begin with the raw amino-acid sequence, 563 residues long: Dihydroxy-acid dehydratase (563 aa).

Cys50 provides a ligand contact to [2Fe-2S] cluster. Asp82 contacts Mg(2+). [2Fe-2S] cluster is bound at residue Cys123. Mg(2+)-binding residues include Asp124 and Lys125. Residue Lys125 is modified to N6-carboxylysine. Cys195 contacts [2Fe-2S] cluster. Glu447 contributes to the Mg(2+) binding site. Catalysis depends on Ser473, which acts as the Proton acceptor.

The protein belongs to the IlvD/Edd family. Homodimer. [2Fe-2S] cluster serves as cofactor. The cofactor is Mg(2+).

The enzyme catalyses (2R)-2,3-dihydroxy-3-methylbutanoate = 3-methyl-2-oxobutanoate + H2O. It catalyses the reaction (2R,3R)-2,3-dihydroxy-3-methylpentanoate = (S)-3-methyl-2-oxopentanoate + H2O. It participates in amino-acid biosynthesis; L-isoleucine biosynthesis; L-isoleucine from 2-oxobutanoate: step 3/4. It functions in the pathway amino-acid biosynthesis; L-valine biosynthesis; L-valine from pyruvate: step 3/4. Functionally, functions in the biosynthesis of branched-chain amino acids. Catalyzes the dehydration of (2R,3R)-2,3-dihydroxy-3-methylpentanoate (2,3-dihydroxy-3-methylvalerate) into 2-oxo-3-methylpentanoate (2-oxo-3-methylvalerate) and of (2R)-2,3-dihydroxy-3-methylbutanoate (2,3-dihydroxyisovalerate) into 2-oxo-3-methylbutanoate (2-oxoisovalerate), the penultimate precursor to L-isoleucine and L-valine, respectively. This chain is Dihydroxy-acid dehydratase, found in Nostoc sp. (strain PCC 7120 / SAG 25.82 / UTEX 2576).